Reading from the N-terminus, the 265-residue chain is Phosphatidylglycerol--prolipoprotein diacylglyceryl transferase (265 aa).

The next 4 membrane-spanning stretches (helical) occupy residues 10–30 (VAIA…LIGI), 56–76 (LVFW…VLFY), 87–107 (LILQ…GVLL), and 117–137 (GKGF…GLGA). R139 contacts a 1,2-diacyl-sn-glycero-3-phospho-(1'-sn-glycerol). The next 3 helical transmembrane spans lie at 172 to 192 (PSQL…LWFY), 200 to 220 (MAVS…VEFV), and 227 to 247 (LGYL…PMIL).

The protein belongs to the Lgt family.

The protein resides in the cell inner membrane. The enzyme catalyses L-cysteinyl-[prolipoprotein] + a 1,2-diacyl-sn-glycero-3-phospho-(1'-sn-glycerol) = an S-1,2-diacyl-sn-glyceryl-L-cysteinyl-[prolipoprotein] + sn-glycerol 1-phosphate + H(+). It functions in the pathway protein modification; lipoprotein biosynthesis (diacylglyceryl transfer). Functionally, catalyzes the transfer of the diacylglyceryl group from phosphatidylglycerol to the sulfhydryl group of the N-terminal cysteine of a prolipoprotein, the first step in the formation of mature lipoproteins. The polypeptide is Phosphatidylglycerol--prolipoprotein diacylglyceryl transferase (Azotobacter vinelandii (strain DJ / ATCC BAA-1303)).